The primary structure comprises 130 residues: uncharacterized protein (130 aa).

It belongs to the HesB/IscA family.

This is an uncharacterized protein from Buchnera aphidicola subsp. Acyrthosiphon pisum (strain APS) (Acyrthosiphon pisum symbiotic bacterium).